Here is a 332-residue protein sequence, read N- to C-terminus: Hdr-like menaquinol oxidoreductase cytochrome b-like subunit (332 aa).

A run of 5 helical transmembrane segments spans residues 3-23, 97-117, 143-163, 177-197, and 230-250; these read GVIF…IGVI, DARW…LVLI, VFIP…FLLW, LPSD…GNVM, and IEPI…YFPF.

In terms of assembly, consists of five subunits: an integral membrane subunit, a cytochrome b-like subunit, a cytochrome c subunit and two iron-sulfur subunits.

It localises to the cell membrane. Functionally, has menaquinol-oxidizing activity. HmeC and HmeD subunits may together mediate electron transfer from menaquinol to an unidentified electron acceptor on the cytoplasmic side of the membrane. The polypeptide is Hdr-like menaquinol oxidoreductase cytochrome b-like subunit (hmeC) (Archaeoglobus fulgidus (strain ATCC 49558 / DSM 4304 / JCM 9628 / NBRC 100126 / VC-16)).